The chain runs to 670 residues: Oxidoreductase PigB (670 aa).

Positions 1 to 19 (MIIQRLFGILYMLAGLAKA) are cleaved as a signal peptide. A run of 4 helical transmembrane segments spans residues 53–73 (GDVINILVGVVLFGSGVILML), 76–96 (LWTTLVIYAQLLMMAVFVVIL), 98–118 (QSQPQVMLLDGVFALAALYML), and 238–258 (LVFFDTFLLLKCLGEIVVGFI).

It belongs to the flavin monoamine oxidase family. Requires FAD as cofactor.

It is found in the membrane. It functions in the pathway antibiotic biosynthesis; prodigiosin biosynthesis. Functionally, involved in the biosynthesis of 2-methyl-3-n-amyl-pyrrole (MAP), one of the terminal products involved in the biosynthesis of the red antibiotic prodigiosin (Pig). Catalyzes the oxidation of dihydro form of MAP (H2MAP) to yield MAP. In Serratia sp. (strain ATCC 39006) (Prodigiosinella confusarubida), this protein is Oxidoreductase PigB.